Consider the following 346-residue polypeptide: MDYKTAGVDVTAGRAFVERIKSCVEKTHKSEVIGGLGGFGGCIRIPKGFESPVLVSGTDGVGTKLELAQQYGCHFGVGIDLVAMCVNDVITNGARPLFFLDYIASGTLTPDALAEVIEGIAAGCCQSDCSLLGGETAEMPGFYPSGRYDLAGFCVGIVENHHLIDGTKINCGDQIIGIKSNGVHSNGFSLVRKVLSMANVDENTLYGKDKRNLIQSLLEPTAIYVQLVEKLLRENLPIHGMTHITGGGLPENLPRIFPSGLLPHIDITTWEITEIFNWLQNAGDIPEIDLWNTFNMGIGFCLIVPKNEVNSALEICMKNDFEAWNIGQVVESQNNSKHSGILGIPS.

Belongs to the AIR synthase family.

It is found in the cytoplasm. It catalyses the reaction 2-formamido-N(1)-(5-O-phospho-beta-D-ribosyl)acetamidine + ATP = 5-amino-1-(5-phospho-beta-D-ribosyl)imidazole + ADP + phosphate + H(+). It participates in purine metabolism; IMP biosynthesis via de novo pathway; 5-amino-1-(5-phospho-D-ribosyl)imidazole from N(2)-formyl-N(1)-(5-phospho-D-ribosyl)glycinamide: step 2/2. The polypeptide is Phosphoribosylformylglycinamidine cyclo-ligase (Prochlorococcus marinus (strain NATL1A)).